We begin with the raw amino-acid sequence, 151 residues long: Deoxyuridine 5'-triphosphate nucleotidohydrolase (151 aa).

Residues 70-72 (RSG), Asn83, 87-89 (LID), and Met97 each bind substrate.

This sequence belongs to the dUTPase family. It depends on Mg(2+) as a cofactor.

The enzyme catalyses dUTP + H2O = dUMP + diphosphate + H(+). The protein operates within pyrimidine metabolism; dUMP biosynthesis; dUMP from dCTP (dUTP route): step 2/2. Its function is as follows. This enzyme is involved in nucleotide metabolism: it produces dUMP, the immediate precursor of thymidine nucleotides and it decreases the intracellular concentration of dUTP so that uracil cannot be incorporated into DNA. The protein is Deoxyuridine 5'-triphosphate nucleotidohydrolase of Sodalis glossinidius (strain morsitans).